The sequence spans 375 residues: tRNA-specific 2-thiouridylase MnmA (375 aa).

Residues 12 to 19 and methionine 38 contribute to the ATP site; that span reads GMSGGVDS. An interaction with target base in tRNA region spans residues 98-100; sequence NPD. Cysteine 103 serves as the catalytic Nucleophile. A disulfide bond links cysteine 103 and cysteine 200. Glycine 127 lines the ATP pocket. The tract at residues 150–152 is interaction with tRNA; the sequence is KDQ. The active-site Cysteine persulfide intermediate is the cysteine 200. The interval 312 to 313 is interaction with tRNA; the sequence is RY.

It belongs to the MnmA/TRMU family.

The protein localises to the cytoplasm. It catalyses the reaction S-sulfanyl-L-cysteinyl-[protein] + uridine(34) in tRNA + AH2 + ATP = 2-thiouridine(34) in tRNA + L-cysteinyl-[protein] + A + AMP + diphosphate + H(+). Its function is as follows. Catalyzes the 2-thiolation of uridine at the wobble position (U34) of tRNA, leading to the formation of s(2)U34. This chain is tRNA-specific 2-thiouridylase MnmA, found in Lactobacillus helveticus (strain DPC 4571).